Consider the following 554-residue polypeptide: Perforin-1 (554 aa).

The N-terminal stretch at 1-20 is a signal peptide; the sequence is MATCLFLLGLFLLLPRPVPA. 3 cysteine pairs are disulfide-bonded: Cys22–Cys75, Cys30–Cys72, and Cys101–Cys175. Residues 26–374 enclose the MACPF domain; that stretch reads TRSECKQKHK…HYIMSRARWQ (349 aa). The chain crosses the membrane as a beta stranded span at residues 128–148; that stretch reads WRVGLDVNPRPEANMRASVAG. N-linked (GlcNAc...) asparagine glycosylation is present at Asn204. 4 disulfide bridges follow: Cys241/Cys407, Cys376/Cys392, Cys380/Cys394, and Cys396/Cys406. The beta stranded transmembrane segment at 256–278 threads the bilayer; sequence CLNVEAQVSIGAQASVSSEYKAC. Residue Asn375 is glycosylated (N-linked (GlcNAc...) asparagine). The EGF-like domain maps to 375–407; that stretch reads NCSRPCRSGQHKSSHDSCQCECQDSKVTNQDCC. The C2 domain maps to 395-513; the sequence is ECQDSKVTNQ…FHEVTCELNH (119 aa). The Ca(2+) site is built by Gly428, Asp429, Thr432, Ala433, Asp435, Asn454, Glu467, Asp483, Ala484, Asp485, Trp488, Asp489, Asp490, and Asp491. 2 disulfide bridges follow: Cys496/Cys509 and Cys524/Cys533. A glycan (N-linked (GlcNAc...) asparagine) is linked at Asn548.

The protein belongs to the complement C6/C7/C8/C9 family. In terms of assembly, monomer, as soluble protein. Homooligomer; homooligomerizes to form a pore-forming ring. Requires Ca(2+) as cofactor. N-glycosylated. The glycosylation sites are facing the interior of the pore. In terms of tissue distribution, detected in cytotoxic T-lymphocytes and natural killer cells.

The protein resides in the cytolytic granule. It localises to the secreted. It is found in the cell membrane. The protein localises to the endosome lumen. Its function is as follows. Pore-forming protein that plays a key role in granzyme-mediated programmed cell death, and in defense against virus-infected or neoplastic cells. Can insert into the membrane of target cells in its calcium-bound form, oligomerize and form large pores. Promotes cytolysis and apoptosis of target cells by mediating the passage and uptake of cytotoxic granzymes. Facilitates the delivery of cationic cargo protein, while anionic or neural proteins are not delivered efficiently. Perforin pores allow the release of mature caspase-7 (CASP7) into the extracellular milieu. This Mus musculus (Mouse) protein is Perforin-1 (Prf1).